The chain runs to 714 residues: Mitochondrial potassium channel ATP-binding subunit (714 aa).

A mitochondrion-targeting transit peptide spans 1-25 (MLVHLFRVGIRGGPVPRWSLQSLRF). Helical transmembrane passes span 127–147 (LLALGLAIVLALGAALVNVQI), 178–198 (IQLLLLYGVQGLLTFGYLVLL), 278–298 (LMLAVVTPALMGVGTLMGSGL), and 365–385 (NIAFNCMVLGTLFIGGSLVAG). The ABC transmembrane type-1 domain maps to 132–419 (LAIVLALGAA…LSVLFGQVVR (288 aa)). The 238-residue stretch at 454-691 (ITFQNVSFSY…GGLYAELIRR (238 aa)) folds into the ABC transporter domain. 489-496 (GQSGGGKT) is a binding site for ATP.

Belongs to the ABC transporter superfamily. ABCB family. Multidrug resistance exporter (TC 3.A.1.201) subfamily. In terms of assembly, the mitochondrial potassium channel (mitoK(ATP)) is composed of 4 subunits of CCDC51/MITOK and 4 subunits of ABCB8/MITOSUR. Physically interacts with PAAT. Interacts with Neuropilin-1 (NRP1) in mitochondria. In terms of tissue distribution, strong expression is found in the heart, brain and testis. In the testis, expressed both in the somatic Sertoli cells and peritubular cells and in the germline (spermatogonia and pachytene spermatocytes). Also expressed in the lung, liver, intestine and kidney.

It localises to the mitochondrion inner membrane. With respect to regulation, channel activity inhibited by ATP via ABCB8/MITOSUR subunit. In terms of biological role, ATP-binding subunit of the mitochondrial ATP-gated potassium channel (mitoK(ATP)). v. An increase in ATP intracellular levels closes the channel, inhibiting K(+) transport, whereas a decrease in ATP levels enhances K(+) uptake in the mitochondrial matrix. Plays a role in mitochondrial iron transport. Required for maintenance of normal cardiac function, possibly by influencing mitochondrial iron export and regulating the maturation of cytosolic iron sulfur cluster-containing enzymes. The protein is Mitochondrial potassium channel ATP-binding subunit of Rattus norvegicus (Rat).